Reading from the N-terminus, the 804-residue chain is Tegument protein UL47 homolog (804 aa).

The span at 1–15 (MQSGHYNRRQSRRQR) shows a compositional bias: basic residues. Disordered stretches follow at residues 1–42 (MQSG…THPP) and 58–206 (LNSE…DYFS). The Nuclear localization signal signature appears at 11–31 (SRRQRISSNTTDSPRHTHGTR). Polar residues predominate over residues 32–42 (YRSTNWYTHPP). Residues 62-72 (MDQDSSSDASD) are compositionally biased toward acidic residues. Over residues 82 to 93 (STYNGSEQNTST) the composition is skewed to polar residues. Over residues 94-109 (SRHENRIFKLTEREAN) the composition is skewed to basic and acidic residues. A run of 3 repeats spans residues 117 to 132 (DAIDDEGEAEEGEAEE), 133 to 148 (DAIDDEGEAEEGEAEE), and 149 to 164 (DAIDDEGEAEEGEAEE). Residues 117–203 (DAIDDEGEAE…IDDEGEAEED (87 aa)) form a 6 X 16 AA approximate tandem repeats region. The span at 118–204 (AIDDEGEAEE…DDEGEAEEDY (87 aa)) shows a compositional bias: acidic residues. One copy of the 1-4; truncated repeat lies at 170–180 (DAIDDEGEAEE). A 1-5; truncated repeat occupies 181–191 (DAIDDEGEAEE). One copy of the 1-6; truncated repeat lies at 192–203 (DAIDDEGEAEED). The short motif at 770–792 (QPIPSVDLAENLMQYRNEILGLD) is the Nuclear export signal element.

This sequence belongs to the alphaherpesvirinae HHV-1 UL47 family. As to quaternary structure, interacts with US3 kinase. Interacts with ORF24 and ORF27; these interactions seem important for efficient virion nuclear egress. Interacts with ORF17/VHS. In terms of processing, phosphorylated by US3. This phosphorylation is required for proper nuclear localization.

It localises to the virion tegument. The protein resides in the host nucleus. It is found in the host cytoplasm. Its function is as follows. Tegument protein that can bind to various RNA transcripts. Plays a role in the attenuation of selective viral and cellular mRNA degradation by modulating the activity of host shutoff RNase ORF17/VHS. Also plays a role in the primary envelopment of virions in the perinuclear space, probably by interacting with two nuclear egress proteins ORF24 and ORF27. The chain is Tegument protein UL47 homolog from Varicella-zoster virus (strain Oka vaccine) (HHV-3).